The sequence spans 284 residues: Formamidopyrimidine-DNA glycosylase (284 aa).

The active-site Schiff-base intermediate with DNA is proline 2. Glutamate 3 functions as the Proton donor in the catalytic mechanism. The Proton donor; for beta-elimination activity role is filled by lysine 58. 3 residues coordinate DNA: histidine 97, arginine 120, and arginine 165. An FPG-type zinc finger spans residues 250 to 284; that stretch reads FVYDRAGEPCKVCGTPVRQIVQGQRSTFYCTHCQH. The active-site Proton donor; for delta-elimination activity is arginine 274.

Belongs to the FPG family. Monomer. Zn(2+) is required as a cofactor.

It catalyses the reaction Hydrolysis of DNA containing ring-opened 7-methylguanine residues, releasing 2,6-diamino-4-hydroxy-5-(N-methyl)formamidopyrimidine.. The enzyme catalyses 2'-deoxyribonucleotide-(2'-deoxyribose 5'-phosphate)-2'-deoxyribonucleotide-DNA = a 3'-end 2'-deoxyribonucleotide-(2,3-dehydro-2,3-deoxyribose 5'-phosphate)-DNA + a 5'-end 5'-phospho-2'-deoxyribonucleoside-DNA + H(+). In terms of biological role, involved in base excision repair of DNA damaged by oxidation or by mutagenic agents. Acts as a DNA glycosylase that recognizes and removes damaged bases. Has a preference for oxidized purines, such as 7,8-dihydro-8-oxoguanine (8-oxoG). Has AP (apurinic/apyrimidinic) lyase activity and introduces nicks in the DNA strand. Cleaves the DNA backbone by beta-delta elimination to generate a single-strand break at the site of the removed base with both 3'- and 5'-phosphates. This Cupriavidus pinatubonensis (strain JMP 134 / LMG 1197) (Cupriavidus necator (strain JMP 134)) protein is Formamidopyrimidine-DNA glycosylase.